Reading from the N-terminus, the 572-residue chain is E3 ubiquitin-protein ligase ZFP91 (572 aa).

Positions 1–12 (MPGETEEPRSPE) are enriched in basic and acidic residues. The tract at residues 1–308 (MPGETEEPRS…PRLPKRRKKP (308 aa)) is disordered. Residues 61 to 70 (AAAAAAAAAA) show a composition bias toward low complexity. Basic residues predominate over residues 72–85 (SRRRKAEYPRRRRS). Ser-86 and Ser-106 each carry phosphoserine. The span at 122–131 (LTTDKDPKEE) shows a compositional bias: basic and acidic residues. Residues 143–162 (SITTTRASRSWRSSSRTSIS) show a composition bias toward low complexity. The segment covering 209 to 225 (SDEEEEEEEEMLISEEE) has biased composition (acidic residues). Basic and acidic residues-rich tracts occupy residues 226 to 247 (IPFKDDPRDETYKPHLERETPK) and 254 to 271 (KVKEEKEKKEIKVEVEVE). Acidic residues predominate over residues 272 to 284 (VKEEENEIREDEE). 5 consecutive C2H2-type zinc fingers follow at residues 313-338 (VRCEMEGCGTVLAHPRYLQHHIKYQH), 344-368 (YVCPHPSCGRLFRLQKQLLRHAKHH), 374-396 (YICEYCARAFKSSHNLAVHRMIH), 402-424 (LQCEICGFTCRQKASLNWHMKKH), and 432-455 (FSCNICGKKFEKKDSVVAHKAKSH). An interaction with MAP3K14/NIK region spans residues 340–370 (LKKKYVCPHPSCGRLFRLQKQLLRHAKHHTD).

Belongs to the krueppel C2H2-type zinc-finger protein family. As to quaternary structure, interacts with MAP3K14/NIK. As to expression, found in all the examined tissues including brain, heart, kidney, lung, liver, spleen, thymus, skeletal muscle, ovary and testis.

It is found in the nucleus. The catalysed reaction is S-ubiquitinyl-[E2 ubiquitin-conjugating enzyme]-L-cysteine + [acceptor protein]-L-lysine = [E2 ubiquitin-conjugating enzyme]-L-cysteine + N(6)-ubiquitinyl-[acceptor protein]-L-lysine.. It participates in protein modification; protein ubiquitination. In terms of biological role, atypical E3 ubiquitin-protein ligase that mediates 'Lys-63'-linked ubiquitination of MAP3K14/NIK, leading to stabilize and activate MAP3K14/NIK. It thereby acts as an activator of the non-canonical NF-kappa-B2/NFKB2 pathway. May also play an important role in cell proliferation and/or anti-apoptosis. In Mus musculus (Mouse), this protein is E3 ubiquitin-protein ligase ZFP91 (Zfp91).